Reading from the N-terminus, the 43-residue chain is Defensin (43 aa).

Cystine bridges form between Cys3/Cys34, Cys20/Cys39, and Cys24/Cys41.

Its subcellular location is the secreted. Functionally, antibacterial peptide. Affects Gram-negative bacteria including methicillin-resistant Staphylococcus aureus. In Trypoxylus dichotomus (Japanese rhinoceros beetle), this protein is Defensin.